The chain runs to 721 residues: MIAKTYTTMLGGRELSIETGKLAKLASGSVTLRYGDTLLLVTAQAREERSTLDFLPLTVEFEERHYAVGRIPGSFHRREGRPGEHAILSARITDRQIRPLFPKGYRQETQVIITVLSADQQNAPDVLGAIGASAALSLSDIPWNGPTACVRVGMIDGEYVINPTSDQLTRSSLDLVVAGTRDAVNMVEAGAQGVSEETLVGAIEFAHRELQGVLDLIETMRAEVGREKFNFLVDSDLSTDLVPELSEAARAAGLRDALLTTKKQERSANLKALRDRLIAERVPDPEAAGAAEQIEALKAAFAKVEKQELRRLILQEDLRADGRNSKTVRPIWIEARPLPRAHGSAIFTRGETQVLGVTTLGTERDELLVDNLTGETNDRFLLHYNFPPYSTGEVKRVGGQSRREVGHGNLAKRAIRAVLPAFDDFPYVIRVVGEVLESNGSSSMATVCAGTLSLMDAGVPIQAPVAGVAMGLVMEGEQYRILTDILGLEDALGDMDFKVCGTAEGVTALQMDIKVSGVTPAIMREALAQAREARLHILGKMAEVLPAPRPELSPTAPRILTLKINPELIGKVIGPGGKQVRELEAMGAQVTIEEDGNIRIFSADGAAAEAVRQKIEGLTREAKVGEEYEGTVVKTAPFGAFVNLFPGQDGMLHISQMSENRVNAVEDVLNVGDRLRVKIANIDDRGKIDLIRPELEGKIAPREPRAARAGGDRGGRPPRRE.

Mg(2+)-binding residues include D490 and D496. The 62-residue stretch at P557–L618 folds into the KH domain. The S1 motif domain occupies G625 to P693. Residues E696–E721 form a disordered region.

Belongs to the polyribonucleotide nucleotidyltransferase family. Mg(2+) is required as a cofactor.

Its subcellular location is the cytoplasm. The enzyme catalyses RNA(n+1) + phosphate = RNA(n) + a ribonucleoside 5'-diphosphate. In terms of biological role, involved in mRNA degradation. Catalyzes the phosphorolysis of single-stranded polyribonucleotides processively in the 3'- to 5'-direction. This chain is Polyribonucleotide nucleotidyltransferase, found in Deinococcus geothermalis (strain DSM 11300 / CIP 105573 / AG-3a).